The following is a 148-amino-acid chain: Glutamate mutase sigma subunit (148 aa).

Positions 3-140 constitute a B12-binding domain; sequence NPTIVIGVIG…KRDIERVMQS (138 aa). Adenosylcob(III)alamin contacts are provided by residues 13 to 17, histidine 16, 61 to 63, and 93 to 97; these read ADCHA, SSI, and NLVIG.

It belongs to the methylaspartate mutase GlmS subunit family. As to quaternary structure, heterotetramer composed of 2 epsilon subunits (GlmE) and 2 sigma subunits (GlmS). GlmE exists as a homodimer and GlmS as a monomer. Adenosylcob(III)alamin serves as cofactor.

The enzyme catalyses (2S,3S)-3-methyl-L-aspartate = L-glutamate. Its pathway is amino-acid degradation; L-glutamate degradation via mesaconate pathway; acetate and pyruvate from L-glutamate: step 1/4. Catalyzes the carbon skeleton rearrangement of L-glutamate to L-threo-3-methylaspartate ((2S,3S)-3-methylaspartate). The chain is Glutamate mutase sigma subunit from Yersinia enterocolitica serotype O:8 / biotype 1B (strain NCTC 13174 / 8081).